The sequence spans 987 residues: Valine--tRNA ligase (987 aa).

The 'HIGH' region motif lies at 45–55; that stretch reads PNVTGSLHMGH. The short motif at 634–638 is the 'KMSKS' region element; sequence KMSKS. Lys637 provides a ligand contact to ATP. The stretch at 917–985 forms a coiled coil; the sequence is VIDIGAEKAR…LSAALARLSE (69 aa).

The protein belongs to the class-I aminoacyl-tRNA synthetase family. ValS type 1 subfamily. Monomer.

It localises to the cytoplasm. It catalyses the reaction tRNA(Val) + L-valine + ATP = L-valyl-tRNA(Val) + AMP + diphosphate. Catalyzes the attachment of valine to tRNA(Val). As ValRS can inadvertently accommodate and process structurally similar amino acids such as threonine, to avoid such errors, it has a 'posttransfer' editing activity that hydrolyzes mischarged Thr-tRNA(Val) in a tRNA-dependent manner. The protein is Valine--tRNA ligase of Cereibacter sphaeroides (strain ATCC 17029 / ATH 2.4.9) (Rhodobacter sphaeroides).